Consider the following 289-residue polypeptide: NAD(P)H-hydrate epimerase (289 aa).

One can recognise a YjeF N-terminal domain in the interval 71–277 (AQTIDNELMS…SIVEKYNLKI (207 aa)). Residue 122-126 (NNGGD) participates in (6S)-NADPHX binding. K(+)-binding residues include asparagine 123 and aspartate 185. Residues 189 to 195 (GFSFRGE) and aspartate 218 contribute to the (6S)-NADPHX site. Serine 221 is a K(+) binding site.

The protein belongs to the NnrE/AIBP family. Requires K(+) as cofactor.

It catalyses the reaction (6R)-NADHX = (6S)-NADHX. The enzyme catalyses (6R)-NADPHX = (6S)-NADPHX. Its function is as follows. Catalyzes the epimerization of the S- and R-forms of NAD(P)HX, a damaged form of NAD(P)H that is a result of enzymatic or heat-dependent hydration. This is a prerequisite for the S-specific NAD(P)H-hydrate dehydratase to allow the repair of both epimers of NAD(P)HX. This chain is NAD(P)H-hydrate epimerase, found in Plasmodium knowlesi (strain H).